Here is a 270-residue protein sequence, read N- to C-terminus: Putative pyruvate, phosphate dikinase regulatory protein 2 (270 aa).

151–158 (GVSRTSKT) serves as a coordination point for ADP.

The protein belongs to the pyruvate, phosphate/water dikinase regulatory protein family. PDRP subfamily.

It catalyses the reaction N(tele)-phospho-L-histidyl/L-threonyl-[pyruvate, phosphate dikinase] + ADP = N(tele)-phospho-L-histidyl/O-phospho-L-threonyl-[pyruvate, phosphate dikinase] + AMP + H(+). The enzyme catalyses N(tele)-phospho-L-histidyl/O-phospho-L-threonyl-[pyruvate, phosphate dikinase] + phosphate + H(+) = N(tele)-phospho-L-histidyl/L-threonyl-[pyruvate, phosphate dikinase] + diphosphate. In terms of biological role, bifunctional serine/threonine kinase and phosphorylase involved in the regulation of the pyruvate, phosphate dikinase (PPDK) by catalyzing its phosphorylation/dephosphorylation. The polypeptide is Putative pyruvate, phosphate dikinase regulatory protein 2 (Listeria innocua serovar 6a (strain ATCC BAA-680 / CLIP 11262)).